Here is a 62-residue protein sequence, read N- to C-terminus: Large ribosomal subunit protein uL30 (62 aa).

This sequence belongs to the universal ribosomal protein uL30 family. Part of the 50S ribosomal subunit.

The polypeptide is Large ribosomal subunit protein uL30 (Shouchella clausii (strain KSM-K16) (Alkalihalobacillus clausii)).